We begin with the raw amino-acid sequence, 448 residues long: Putative F-box/LRR-repeat protein At3g44810 (448 aa).

The 49-residue stretch at Thr6–Ser54 folds into the F-box domain. LRR repeat units follow at residues Val117–Ser141, Thr143–Pro165, Cys190–Lys213, Phe228–Arg251, Val290–Gly313, and Ile421–Leu443.

The sequence is that of Putative F-box/LRR-repeat protein At3g44810 from Arabidopsis thaliana (Mouse-ear cress).